The primary structure comprises 930 residues: Bifunctional uridylyltransferase/uridylyl-removing enzyme (930 aa).

The uridylyltransferase stretch occupies residues 1-387 (MAPASEAGPA…IMGLFRRKKR (387 aa)). The segment at 388 to 741 (LKPEYSLVNG…LDPDPDRDAT (354 aa)) is uridylyl-removing. The HD domain occupies 504–626 (VDEHTIQCIS…VRSKKRLDLL (123 aa)). 2 consecutive ACT domains span residues 742-818 (RACF…VVAR) and 852-927 (IIEV…GAER).

The protein belongs to the GlnD family. Mg(2+) serves as cofactor.

The catalysed reaction is [protein-PII]-L-tyrosine + UTP = [protein-PII]-uridylyl-L-tyrosine + diphosphate. It carries out the reaction [protein-PII]-uridylyl-L-tyrosine + H2O = [protein-PII]-L-tyrosine + UMP + H(+). Its activity is regulated as follows. Uridylyltransferase (UTase) activity is inhibited by glutamine, while glutamine activates uridylyl-removing (UR) activity. In terms of biological role, modifies, by uridylylation and deuridylylation, the PII regulatory proteins (GlnB and homologs), in response to the nitrogen status of the cell that GlnD senses through the glutamine level. Under low glutamine levels, catalyzes the conversion of the PII proteins and UTP to PII-UMP and PPi, while under higher glutamine levels, GlnD hydrolyzes PII-UMP to PII and UMP (deuridylylation). Thus, controls uridylylation state and activity of the PII proteins, and plays an important role in the regulation of nitrogen fixation and metabolism. The chain is Bifunctional uridylyltransferase/uridylyl-removing enzyme from Cereibacter sphaeroides (strain ATCC 17023 / DSM 158 / JCM 6121 / CCUG 31486 / LMG 2827 / NBRC 12203 / NCIMB 8253 / ATH 2.4.1.) (Rhodobacter sphaeroides).